A 386-amino-acid chain; its full sequence is MFPEPPTPGSPAPETPPDSSRIRQGAVPAWVLATILLGSGLLVFSSCFCLYRKRCRRRMGKKSQAQAQVHLQEVKELGRSYIDKVQPEIEELDPSPSMPGQQVLDKHQLGRLQYSLDYDFQTGQLLVGILQAEGLAALDLGGSSDPYVSVYLLPDKRRRHETKVHRQTLNPHFGETFAFKVPYVELGGRVLVMAVYDFDRFSRNDAIGEVRVPMSSVNLGRPVQAWRELQVAPKEEQEKLGDICFSLRYVPTAGKLTVIVLEAKNLKKMDVGGLSDPYVKVHLLQGGKKVRKKKTTIKKNTLNPYYNEAFSFEVPCDQVQKVQVELTVLDYDKLGKNEAIGRVAVGTAVGGAGLRHWADMLANPRRPIAQWHSLRPPDRARPIPAP.

The span at 1–16 (MFPEPPTPGSPAPETP) shows a compositional bias: pro residues. Residues 1-21 (MFPEPPTPGSPAPETPPDSSR) are disordered. The Vesicular portion of the chain corresponds to 1–24 (MFPEPPTPGSPAPETPPDSSRIRQ). A helical transmembrane segment spans residues 25–45 (GAVPAWVLATILLGSGLLVFS). At 46 to 386 (SCFCLYRKRC…PDRARPIPAP (341 aa)) the chain is on the cytoplasmic side. C2 domains lie at 108–227 (QLGR…QAWR) and 239–372 (KLGD…AQWH). Positions 138, 139, 145, 197, 198, 199, 202, 205, 270, 276, 330, and 332 each coordinate Ca(2+).

Belongs to the synaptotagmin family. Homodimer. Interacts with both alpha- and beta-tubulin. Ca(2+) is required as a cofactor. Expressed in kidney, adipose tissue, lung and heart, as well as at higher levels in brain.

The protein resides in the cytoplasmic vesicle. It is found in the secretory vesicle. Its subcellular location is the synaptic vesicle membrane. It localises to the recycling endosome membrane. Its function is as follows. May be involved in Ca(2+)-dependent exocytosis of secretory vesicles through Ca(2+) and phospholipid binding to the C2 domain or may serve as Ca(2+) sensors in the process of vesicular trafficking and exocytosis. Regulates the Ca(2+)-dependent secretion of norepinephrine in PC12 cells. Required for export from the endocytic recycling compartment to the cell surface. The chain is Synaptotagmin-5 (Syt5) from Rattus norvegicus (Rat).